We begin with the raw amino-acid sequence, 117 residues long: Probable non-functional immunoglobulin heavy variable 1-38-4 (117 aa).

Residues methionine 1–serine 19 form the signal peptide. Residues glutamine 20 to serine 44 are framework-1. In terms of domain architecture, Ig-like spans glutamine 20 to arginine 117. Residues glycine 45–glycine 52 form a complementarity-determining-1 region. A framework-2 region spans residues isoleucine 53 to tryptophan 69. Residues isoleucine 70–proline 77 are complementarity-determining-2. Asparagine 74 carries N-linked (GlcNAc...) asparagine glycosylation. A framework-3 region spans residues serine 78–tyrosine 115. The interval alanine 116–arginine 117 is complementarity-determining-3.

In terms of assembly, most probably, the immunoglobulin is not assembled due to incorrect folding of heavy chain. Immunoglobulins are composed of two identical heavy chains and two identical light chains; disulfide-linked.

It is found in the secreted. The protein localises to the cell membrane. In terms of biological role, probable non-functional open reading frame (ORF) of V region of the variable domain of immunoglobulin heavy chains. Non-functional ORF generally cannot participate in the synthesis of a productive immunoglobulin chain due to altered V-(D)-J or switch recombination and/or splicing site (at mRNA level) and/or conserved amino acid change (protein level). Immunoglobulins, also known as antibodies, are membrane-bound or secreted glycoproteins produced by B lymphocytes. In the recognition phase of humoral immunity, the membrane-bound immunoglobulins serve as receptors which, upon binding of a specific antigen, trigger the clonal expansion and differentiation of B lymphocytes into immunoglobulins-secreting plasma cells. Secreted immunoglobulins mediate the effector phase of humoral immunity, which results in the elimination of bound antigens. The antigen binding site is formed by the variable domain of one heavy chain, together with that of its associated light chain. Thus, each immunoglobulin has two antigen binding sites with remarkable affinity for a particular antigen. The variable domains are assembled by a process called V-(D)-J rearrangement and can then be subjected to somatic hypermutations which, after exposure to antigen and selection, allow affinity maturation for a particular antigen. The polypeptide is Probable non-functional immunoglobulin heavy variable 1-38-4 (Homo sapiens (Human)).